The primary structure comprises 123 residues: Small ribosomal subunit protein uS13 (123 aa).

Positions 99–113 are enriched in basic residues; that stretch reads RGQRTHTNARTRKGG. The tract at residues 99–123 is disordered; that stretch reads RGQRTHTNARTRKGGSRLAVAAKKK.

This sequence belongs to the universal ribosomal protein uS13 family. Part of the 30S ribosomal subunit. Forms a loose heterodimer with protein S19. Forms two bridges to the 50S subunit in the 70S ribosome.

Its function is as follows. Located at the top of the head of the 30S subunit, it contacts several helices of the 16S rRNA. In the 70S ribosome it contacts the 23S rRNA (bridge B1a) and protein L5 of the 50S subunit (bridge B1b), connecting the 2 subunits; these bridges are implicated in subunit movement. Contacts the tRNAs in the A and P-sites. The polypeptide is Small ribosomal subunit protein uS13 (Anaplasma phagocytophilum (strain HZ)).